The primary structure comprises 803 residues: Protein AMEIOTIC 1 homolog (803 aa).

Disordered stretches follow at residues 21 to 64 (RPQV…QSLS) and 264 to 333 (RLRQ…RWSA). Over residues 39–50 (NGKDDANHDESK) the composition is skewed to basic and acidic residues. Over residues 51-64 (NQSPGLPLSRQSLS) the composition is skewed to polar residues. A compositionally biased stretch (basic and acidic residues) spans 283-295 (KREEAESSMDKSR). Positions 296–313 (AARKKKAKTYKSPKKVEK) are enriched in basic residues. Over residues 314 to 333 (RRVVEAKDGDPRRGKDRWSA) the composition is skewed to basic and acidic residues. A coiled-coil region spans residues 450–567 (VKKKVEELAE…SSFLSLKEQL (118 aa)). Residues 651–688 (ISGGGSSSCPVASGPEQLPRSSSCPSIGPGGLPPSSRA) are disordered.

The protein localises to the nucleus. It is found in the chromosome. Its function is as follows. Plays a fundamental role in building the proper chromosome structure at the beginning of meiosis in male meiocytes. Required for the transition from leptotene to zygotene in meiocytes. Required for homologous chromosome pairing. This Oryza sativa subsp. japonica (Rice) protein is Protein AMEIOTIC 1 homolog.